The sequence spans 514 residues: 3-octaprenyl-4-hydroxybenzoate carboxy-lyase (514 aa).

Asn177 lines the Mn(2+) pocket. Residues 180–182 (IYR), 194–196 (RWL), and 199–200 (RG) each bind prenylated FMN. Glu243 provides a ligand contact to Mn(2+). The Proton donor role is filled by Asp314.

This sequence belongs to the UbiD family. Homohexamer. Requires prenylated FMN as cofactor. It depends on Mn(2+) as a cofactor.

The protein resides in the cell membrane. The enzyme catalyses a 4-hydroxy-3-(all-trans-polyprenyl)benzoate + H(+) = a 2-(all-trans-polyprenyl)phenol + CO2. The protein operates within cofactor biosynthesis; ubiquinone biosynthesis. In terms of biological role, catalyzes the decarboxylation of 3-octaprenyl-4-hydroxy benzoate to 2-octaprenylphenol, an intermediate step in ubiquinone biosynthesis. The polypeptide is 3-octaprenyl-4-hydroxybenzoate carboxy-lyase (Bordetella bronchiseptica (strain ATCC BAA-588 / NCTC 13252 / RB50) (Alcaligenes bronchisepticus)).